The chain runs to 121 residues: Large ribosomal subunit protein uL22 (121 aa).

The protein belongs to the universal ribosomal protein uL22 family. Part of the 50S ribosomal subunit.

In terms of biological role, this protein binds specifically to 23S rRNA; its binding is stimulated by other ribosomal proteins, e.g. L4, L17, and L20. It is important during the early stages of 50S assembly. It makes multiple contacts with different domains of the 23S rRNA in the assembled 50S subunit and ribosome. The globular domain of the protein is located near the polypeptide exit tunnel on the outside of the subunit, while an extended beta-hairpin is found that lines the wall of the exit tunnel in the center of the 70S ribosome. This Rickettsia massiliae (strain Mtu5) protein is Large ribosomal subunit protein uL22.